The following is a 485-amino-acid chain: Phosphoglucosamine mutase (485 aa).

S133 functions as the Phosphoserine intermediate in the catalytic mechanism. Mg(2+) is bound by residues S133, D274, D276, and D278. The residue at position 133 (S133) is a Phosphoserine.

Belongs to the phosphohexose mutase family. The cofactor is Mg(2+). Activated by phosphorylation.

The enzyme catalyses alpha-D-glucosamine 1-phosphate = D-glucosamine 6-phosphate. In terms of biological role, catalyzes the conversion of glucosamine-6-phosphate to glucosamine-1-phosphate. The chain is Phosphoglucosamine mutase from Crocosphaera subtropica (strain ATCC 51142 / BH68) (Cyanothece sp. (strain ATCC 51142)).